Reading from the N-terminus, the 559-residue chain is 2,3-bisphosphoglycerate-independent phosphoglycerate mutase (559 aa).

Mn(2+) is bound by residues aspartate 28 and serine 81. Serine 81 acts as the Phosphoserine intermediate in catalysis. Substrate contacts are provided by residues histidine 140, 170-171 (RD), arginine 206, arginine 213, 286-289 (RADR), and lysine 361. Positions 430, 434, 471, 472, and 501 each coordinate Mn(2+).

It belongs to the BPG-independent phosphoglycerate mutase family. In terms of assembly, monomer. Requires Mn(2+) as cofactor. Found ubiquitously in germinating seed.

It is found in the cytoplasm. It carries out the reaction (2R)-2-phosphoglycerate = (2R)-3-phosphoglycerate. It functions in the pathway carbohydrate degradation; glycolysis; pyruvate from D-glyceraldehyde 3-phosphate: step 3/5. In terms of biological role, catalyzes the interconversion of 2-phosphoglycerate and 3-phosphoglycerate. This is 2,3-bisphosphoglycerate-independent phosphoglycerate mutase from Nicotiana tabacum (Common tobacco).